Reading from the N-terminus, the 323-residue chain is Beta-ketoacyl-[acyl-carrier-protein] synthase III (323 aa).

Residues C113 and H250 contribute to the active site. The ACP-binding stretch occupies residues 251 to 255 (QANRR). N280 is a catalytic residue.

This sequence belongs to the thiolase-like superfamily. FabH family. Homodimer.

It localises to the cytoplasm. The enzyme catalyses malonyl-[ACP] + acetyl-CoA + H(+) = 3-oxobutanoyl-[ACP] + CO2 + CoA. The protein operates within lipid metabolism; fatty acid biosynthesis. Functionally, catalyzes the condensation reaction of fatty acid synthesis by the addition to an acyl acceptor of two carbons from malonyl-ACP. Catalyzes the first condensation reaction which initiates fatty acid synthesis and may therefore play a role in governing the total rate of fatty acid production. Possesses both acetoacetyl-ACP synthase and acetyl transacylase activities. Its substrate specificity determines the biosynthesis of branched-chain and/or straight-chain of fatty acids. The sequence is that of Beta-ketoacyl-[acyl-carrier-protein] synthase III from Rhizobium johnstonii (strain DSM 114642 / LMG 32736 / 3841) (Rhizobium leguminosarum bv. viciae).